Consider the following 50-residue polypeptide: Protein hunchback (50 aa).

3 C2H2-type zinc fingers span residues His1–His5, Ile11–His33, and Tyr39–Tyr50.

It belongs to the hunchback C2H2-type zinc-finger protein family.

The protein localises to the nucleus. In terms of biological role, gap class segmentation protein that controls development of head structures. In Bradysia coprophila (Dark-winged fungus gnat), this protein is Protein hunchback (hb).